A 445-amino-acid chain; its full sequence is Guanosine nucleotide diphosphate dissociation inhibitor At5g09550 (445 aa).

The protein belongs to the Rab GDI family.

Functionally, regulates the GDP/GTP exchange reaction of most RAB proteins by inhibiting the dissociation of GDP from them, and the subsequent binding of GTP. In Arabidopsis thaliana (Mouse-ear cress), this protein is Guanosine nucleotide diphosphate dissociation inhibitor At5g09550.